Consider the following 248-residue polypeptide: tRNA (guanine-N(1)-)-methyltransferase (248 aa).

Residues G117 and 137 to 142 (IGDFVL) each bind S-adenosyl-L-methionine.

This sequence belongs to the RNA methyltransferase TrmD family. As to quaternary structure, homodimer.

Its subcellular location is the cytoplasm. The enzyme catalyses guanosine(37) in tRNA + S-adenosyl-L-methionine = N(1)-methylguanosine(37) in tRNA + S-adenosyl-L-homocysteine + H(+). Its function is as follows. Specifically methylates guanosine-37 in various tRNAs. This chain is tRNA (guanine-N(1)-)-methyltransferase, found in Polynucleobacter asymbioticus (strain DSM 18221 / CIP 109841 / QLW-P1DMWA-1) (Polynucleobacter necessarius subsp. asymbioticus).